A 112-amino-acid polypeptide reads, in one-letter code: T cell receptor alpha variable 13-1 (112 aa).

Residues 1 to 20 form the signal peptide; that stretch reads MTSIRAVFIFLWLQLDLVNG. Residues 21 to 112 enclose the Ig-like domain; the sequence is ENVEQHPSTL…DSAVYFCAAS (92 aa). Cysteine 42 and cysteine 109 are joined by a disulfide. N-linked (GlcNAc...) asparagine glycosylation occurs at asparagine 86.

As to quaternary structure, alpha-beta TR is a heterodimer composed of an alpha and beta chain; disulfide-linked. The alpha-beta TR is associated with the transmembrane signaling CD3 coreceptor proteins to form the TR-CD3 (TcR or TCR). The assembly of alpha-beta TR heterodimers with CD3 occurs in the endoplasmic reticulum where a single alpha-beta TR heterodimer associates with one CD3D-CD3E heterodimer, one CD3G-CD3E heterodimer and one CD247 homodimer forming a stable octameric structure. CD3D-CD3E and CD3G-CD3E heterodimers preferentially associate with TR alpha and TR beta chains, respectively. The association of the CD247 homodimer is the last step of TcR assembly in the endoplasmic reticulum and is required for transport to the cell surface.

It is found in the cell membrane. Functionally, v region of the variable domain of T cell receptor (TR) alpha chain that participates in the antigen recognition. Alpha-beta T cell receptors are antigen specific receptors which are essential to the immune response and are present on the cell surface of T lymphocytes. Recognize peptide-major histocompatibility (MH) (pMH) complexes that are displayed by antigen presenting cells (APC), a prerequisite for efficient T cell adaptive immunity against pathogens. Binding of alpha-beta TR to pMH complex initiates TR-CD3 clustering on the cell surface and intracellular activation of LCK that phosphorylates the ITAM motifs of CD3G, CD3D, CD3E and CD247 enabling the recruitment of ZAP70. In turn ZAP70 phosphorylates LAT, which recruits numerous signaling molecules to form the LAT signalosome. The LAT signalosome propagates signal branching to three major signaling pathways, the calcium, the mitogen-activated protein kinase (MAPK) kinase and the nuclear factor NF-kappa-B (NF-kB) pathways, leading to the mobilization of transcription factors that are critical for gene expression and essential for T cell growth and differentiation. The T cell repertoire is generated in the thymus, by V-(D)-J rearrangement. This repertoire is then shaped by intrathymic selection events to generate a peripheral T cell pool of self-MH restricted, non-autoaggressive T cells. Post-thymic interaction of alpha-beta TR with the pMH complexes shapes TR structural and functional avidity. This is T cell receptor alpha variable 13-1 from Homo sapiens (Human).